The primary structure comprises 351 residues: Porphobilinogen deaminase (351 aa).

S-(dipyrrolylmethanemethyl)cysteine is present on Cys-242. One can recognise an RPE1 insert domain in the interval 257 to 306 (PRHLSKLAYREVLEGNTEALATAAYKSNRTDASTGLTYKLPLEVEFGKVS).

This sequence belongs to the HMBS family. In terms of assembly, monomer. Requires dipyrromethane as cofactor.

The catalysed reaction is 4 porphobilinogen + H2O = hydroxymethylbilane + 4 NH4(+). It participates in porphyrin-containing compound metabolism; protoporphyrin-IX biosynthesis; coproporphyrinogen-III from 5-aminolevulinate: step 2/4. Functionally, tetrapolymerization of the monopyrrole PBG into the hydroxymethylbilane pre-uroporphyrinogen in several discrete steps. This chain is Porphobilinogen deaminase, found in Rickettsia conorii (strain ATCC VR-613 / Malish 7).